Here is a 469-residue protein sequence, read N- to C-terminus: Trigger factor (469 aa).

The 86-residue stretch at 165-250 folds into the PPIase FKBP-type domain; the sequence is GDRVTIDYIG…VKAVCKSDEL (86 aa). Over residues 444–460 the composition is skewed to basic and acidic residues; sequence DLTEKKPLKKKTAEKVS. Residues 444–469 are disordered; the sequence is DLTEKKPLKKKTAEKVSTKKKAPKKS.

Belongs to the FKBP-type PPIase family. Tig subfamily.

It is found in the cytoplasm. The catalysed reaction is [protein]-peptidylproline (omega=180) = [protein]-peptidylproline (omega=0). In terms of biological role, involved in protein export. Acts as a chaperone by maintaining the newly synthesized protein in an open conformation. Functions as a peptidyl-prolyl cis-trans isomerase. This chain is Trigger factor, found in Bartonella henselae (strain ATCC 49882 / DSM 28221 / CCUG 30454 / Houston 1) (Rochalimaea henselae).